The primary structure comprises 990 residues: DNA ligase 4 (990 aa).

Residues 57–84 are disordered; it reads TQKKGRQPPGPRRKAGPHGHSNLSPHEA. The ATP site is built by Glu324, Lys326, Leu327, Arg331, Glu394, Phe436, Glu496, Lys501, Lys518, and Lys520. Lys326 serves as the catalytic N6-AMP-lysine intermediate. Residue Glu394 participates in Mg(2+) binding. Residue Glu496 participates in Mg(2+) binding. BRCT domains follow at residues 728–821 and 900–989; these read PQSK…LPYL and YMFS…RYQW.

This sequence belongs to the ATP-dependent DNA ligase family. Mg(2+) is required as a cofactor.

The protein localises to the nucleus. The catalysed reaction is ATP + (deoxyribonucleotide)n-3'-hydroxyl + 5'-phospho-(deoxyribonucleotide)m = (deoxyribonucleotide)n+m + AMP + diphosphate.. Functionally, DNA ligase involved in DNA non-homologous end joining (NHEJ); required for double-strand break (DSB) repair. This chain is DNA ligase 4 (LIG4), found in Phaeosphaeria nodorum (strain SN15 / ATCC MYA-4574 / FGSC 10173) (Glume blotch fungus).